The sequence spans 141 residues: uncharacterized protein (141 aa).

Helical transmembrane passes span 41 to 61 (LIML…NYLF) and 95 to 115 (IIFL…SGFF).

The protein resides in the cell membrane. This is an uncharacterized protein from Rickettsia prowazekii (strain Madrid E).